A 90-amino-acid chain; its full sequence is Carboxysome shell vertex protein CsoS4A (90 aa).

The BMV domain occupies Met-1–Asp-78.

This sequence belongs to the CcmL/EutN family. CsoS4 subfamily. In terms of assembly, homopentamer.

It localises to the carboxysome. Functionally, probably forms vertices in the carboxysome, a polyhedral inclusion where RuBisCO (ribulose bisphosphate carboxylase, cbbL-cbbS) is sequestered. Has been modeled to induce curvature upon insertion into an otherwise flat hexagonal layer of major carboxysome subunits. The sequence is that of Carboxysome shell vertex protein CsoS4A from Hydrogenovibrio crunogenus (strain DSM 25203 / XCL-2) (Thiomicrospira crunogena).